We begin with the raw amino-acid sequence, 515 residues long: Maturase K (515 aa).

This sequence belongs to the intron maturase 2 family. MatK subfamily.

It is found in the plastid. Its subcellular location is the chloroplast. Usually encoded in the trnK tRNA gene intron. Probably assists in splicing its own and other chloroplast group II introns. This is Maturase K from Alpinia calcarata (Snap ginger).